The following is a 113-amino-acid chain: Large ribosomal subunit protein uL22 (113 aa).

Belongs to the universal ribosomal protein uL22 family. As to quaternary structure, part of the 50S ribosomal subunit.

This protein binds specifically to 23S rRNA; its binding is stimulated by other ribosomal proteins, e.g. L4, L17, and L20. It is important during the early stages of 50S assembly. It makes multiple contacts with different domains of the 23S rRNA in the assembled 50S subunit and ribosome. Its function is as follows. The globular domain of the protein is located near the polypeptide exit tunnel on the outside of the subunit, while an extended beta-hairpin is found that lines the wall of the exit tunnel in the center of the 70S ribosome. This is Large ribosomal subunit protein uL22 from Syntrophomonas wolfei subsp. wolfei (strain DSM 2245B / Goettingen).